Here is a 745-residue protein sequence, read N- to C-terminus: Gamma-tubulin complex component 4 (745 aa).

It belongs to the TUBGCP family. In terms of assembly, gamma-tubulin complex is composed of gamma-tubulin and GCP proteins.

The protein resides in the cytoplasm. Its subcellular location is the cytoskeleton. It localises to the microtubule organizing center. The protein localises to the spindle. Gamma-tubulin complex is necessary for microtubule nucleation at the microtubule organizing centers (MTOCs). Functionally, gamma-tubulin complex is essential for the control of microtubular network remodeling in the course of initiation and development of giant-feeding cells, and for the successful reproduction of nematodes (e.g. Meloidogyne spp.) in their plant hosts. This chain is Gamma-tubulin complex component 4 (GCP4), found in Arabidopsis thaliana (Mouse-ear cress).